Consider the following 931-residue polypeptide: Isoleucine--tRNA ligase (931 aa).

The 'HIGH' region signature appears at 57-67 (PFANGNIHMGH). Glu556 lines the L-isoleucyl-5'-AMP pocket. The short motif at 597–601 (KMSKS) is the 'KMSKS' region element. Lys600 contacts ATP. Residues Cys890, Cys893, Cys910, and Cys913 each coordinate Zn(2+).

This sequence belongs to the class-I aminoacyl-tRNA synthetase family. IleS type 1 subfamily. As to quaternary structure, monomer. Zn(2+) is required as a cofactor.

The protein resides in the cytoplasm. The catalysed reaction is tRNA(Ile) + L-isoleucine + ATP = L-isoleucyl-tRNA(Ile) + AMP + diphosphate. Its function is as follows. Catalyzes the attachment of isoleucine to tRNA(Ile). As IleRS can inadvertently accommodate and process structurally similar amino acids such as valine, to avoid such errors it has two additional distinct tRNA(Ile)-dependent editing activities. One activity is designated as 'pretransfer' editing and involves the hydrolysis of activated Val-AMP. The other activity is designated 'posttransfer' editing and involves deacylation of mischarged Val-tRNA(Ile). The sequence is that of Isoleucine--tRNA ligase from Lactobacillus delbrueckii subsp. bulgaricus (strain ATCC 11842 / DSM 20081 / BCRC 10696 / JCM 1002 / NBRC 13953 / NCIMB 11778 / NCTC 12712 / WDCM 00102 / Lb 14).